We begin with the raw amino-acid sequence, 196 residues long: C-type lectin domain family 3 member A (196 aa).

The first 22 residues, 1-22, serve as a signal peptide directing secretion; the sequence is MAKNGLVLCILVVSLLLDQTDG. 3 disulfide bridges follow: Cys68–Cys78, Cys95–Cys191, and Cys167–Cys183. Residues 74–192 form the C-type lectin domain; that stretch reads VHKKCYLASE…CRSSKRYICE (119 aa).

Its subcellular location is the secreted. Promotes cell adhesion to laminin and fibronectin. The sequence is that of C-type lectin domain family 3 member A (Clec3a) from Mus musculus (Mouse).